The primary structure comprises 383 residues: Meiotically up-regulated gene 93 protein (383 aa).

The stretch at 75 to 108 (KKVIWRRGLAYLRLGHPHLANRDWEHSLELDPNN) is one TPR repeat.

It is found in the cytoplasm. The protein localises to the nucleus. Functionally, has a role in meiosis. This chain is Meiotically up-regulated gene 93 protein (mug93), found in Schizosaccharomyces pombe (strain 972 / ATCC 24843) (Fission yeast).